A 396-amino-acid polypeptide reads, in one-letter code: Coiled-coil domain-containing protein 1 (396 aa).

The N-terminal stretch at Met1–Gly21 is a signal peptide. Coiled coils occupy residues Lys53–Asp73, Glu109–Asp129, Asp208–Thr242, and Tyr287–His308. Residues Asp231 to Asp256 are compositionally biased toward acidic residues. 2 disordered regions span residues Asp231–His260 and Glu288–Asp378.

As to expression, component of the acid-insoluble and acid-soluble organic matrix of calcified layers of the shell (at protein level).

The protein localises to the secreted. The sequence is that of Coiled-coil domain-containing protein 1 from Lottia gigantea (Giant owl limpet).